The sequence spans 465 residues: Hexokinase type 1 (465 aa).

Positions 8–447 (EEDFPEVYKV…CGVGAAIMAG (440 aa)) constitute a Hexokinase domain. The hexokinase small subdomain stretch occupies residues 65–197 (TGRERGQFLA…EISVDVMGII (133 aa)). Lys88 provides a ligand contact to ATP. Residues 139–165 (PLGIAFAFTLKKLALDVGILVSWTKEF) are glucose-binding. The hexokinase large subdomain stretch occupies residues 198–436 (NVGAGSLLAL…YNFEFVITQD (239 aa)).

Belongs to the hexokinase family.

The enzyme catalyses a D-hexose + ATP = a D-hexose 6-phosphate + ADP + H(+). It carries out the reaction D-mannose + ATP = D-mannose 6-phosphate + ADP + H(+). The catalysed reaction is D-fructose + ATP = D-fructose 6-phosphate + ADP + H(+). It catalyses the reaction D-glucose + ATP = D-glucose 6-phosphate + ADP + H(+). It functions in the pathway carbohydrate metabolism; hexose metabolism. Its pathway is carbohydrate degradation; glycolysis; D-glyceraldehyde 3-phosphate and glycerone phosphate from D-glucose: step 1/4. Catalyzes the phosphorylation of various hexoses to hexose 6-phosphate. This is Hexokinase type 1 (Hex-t1) from Drosophila melanogaster (Fruit fly).